A 283-amino-acid polypeptide reads, in one-letter code: MQVLKEKLLIHQQVDNWRKDGNRIAFVPTMGNLHEGHFSLVREAKRHAEKVVVSIFVNPMQFNNPQDLLLYPRTMDQDCSQLQNLGVDLVYAPTVEELYPEGSQDITFVDVPKLSTMLEGASRPGHFRGVTTVVSKLFHIVNPDVACFGEKDFQQVAIIKKMVRDLNFFIEIIQVPIVRADDGLALSSRNGYLTSEERKIAPNLYKILKKLAQELSNGNGDLEKLIAETNTELSRCRFIPDQLEICDSTTLEPFTAGTKNVVILAAAWLGKARLIDNIQTTIN.

The protein belongs to the pantothenate synthetase family.

It catalyses the reaction (R)-pantoate + beta-alanine + ATP = (R)-pantothenate + AMP + diphosphate + H(+). It functions in the pathway cofactor biosynthesis; (R)-pantothenate biosynthesis; (R)-pantothenate from (R)-pantoate and beta-alanine: step 1/1. The protein is Pantoate--beta-alanine ligase (pan6) of Schizosaccharomyces pombe (strain 972 / ATCC 24843) (Fission yeast).